The sequence spans 556 residues: Formate--tetrahydrofolate ligase (556 aa).

Position 65-72 (65-72 (TPAGEGKS)) interacts with ATP.

Belongs to the formate--tetrahydrofolate ligase family.

The catalysed reaction is (6S)-5,6,7,8-tetrahydrofolate + formate + ATP = (6R)-10-formyltetrahydrofolate + ADP + phosphate. Its pathway is one-carbon metabolism; tetrahydrofolate interconversion. The sequence is that of Formate--tetrahydrofolate ligase from Clostridium perfringens (strain SM101 / Type A).